A 380-amino-acid chain; its full sequence is XK-related protein 9 (380 aa).

Helical transmembrane passes span 10–30 (LLSAAGLVMYVADVCTDAALV), 39–59 (VVCAALTLLFIVVGLLVTQVF), 81–101 (LPVVSKRGLATLHLFGVGIFI), 167–187 (CSLVQLVGMSFSFMNAAWALV), 228–248 (ALLLIFSIYSTVGLAIVWLLG), 264–284 (SLEFLYRAIVGVILTFTFFNV), 294–314 (ITYYFLHSLINVLSLLLLFVL), and 329–349 (TLMAACSVLGLVCLVLYYLLL).

This sequence belongs to the XK family.

The protein localises to the cell membrane. It carries out the reaction a 1,2-diacyl-sn-glycero-3-phospho-L-serine(in) = a 1,2-diacyl-sn-glycero-3-phospho-L-serine(out). In terms of biological role, phospholipid scramblase that promotes phosphatidylserine exposure on apoptotic cell surface. Phosphatidylserine is a specific marker only present at the surface of apoptotic cells and acts as a specific signal for engulfment. This is XK-related protein 9 from Tetraodon nigroviridis (Spotted green pufferfish).